Consider the following 600-residue polypeptide: NADH-quinone oxidoreductase subunit C/D (600 aa).

Positions Met1–Gln190 are NADH dehydrogenase I subunit C. The segment at Asp214 to Arg600 is NADH dehydrogenase I subunit D.

The protein in the N-terminal section; belongs to the complex I 30 kDa subunit family. This sequence in the C-terminal section; belongs to the complex I 49 kDa subunit family. NDH-1 is composed of 13 different subunits. Subunits NuoB, CD, E, F, and G constitute the peripheral sector of the complex.

Its subcellular location is the cell inner membrane. It carries out the reaction a quinone + NADH + 5 H(+)(in) = a quinol + NAD(+) + 4 H(+)(out). Its function is as follows. NDH-1 shuttles electrons from NADH, via FMN and iron-sulfur (Fe-S) centers, to quinones in the respiratory chain. The immediate electron acceptor for the enzyme in this species is believed to be ubiquinone. Couples the redox reaction to proton translocation (for every two electrons transferred, four hydrogen ions are translocated across the cytoplasmic membrane), and thus conserves the redox energy in a proton gradient. This chain is NADH-quinone oxidoreductase subunit C/D, found in Citrobacter koseri (strain ATCC BAA-895 / CDC 4225-83 / SGSC4696).